The sequence spans 121 residues: Large ribosomal subunit protein uL24 (121 aa).

Belongs to the universal ribosomal protein uL24 family. As to quaternary structure, part of the 50S ribosomal subunit.

Its function is as follows. One of two assembly initiator proteins, it binds directly to the 5'-end of the 23S rRNA, where it nucleates assembly of the 50S subunit. Located at the polypeptide exit tunnel on the outside of the subunit. The protein is Large ribosomal subunit protein uL24 of Pyrococcus furiosus (strain ATCC 43587 / DSM 3638 / JCM 8422 / Vc1).